We begin with the raw amino-acid sequence, 223 residues long: Neurotrophic factor BDNF precursor form (223 aa).

An N-terminal signal peptide occupies residues 1–5 (SCMKA). The propeptide occupies 6–114 (APMKEVSIRG…AANMSMRVRR (109 aa)). N-linked (GlcNAc...) asparagine glycosylation is present at Asn-107. Disulfide bonds link Cys-127–Cys-194 and Cys-172–Cys-223.

It belongs to the NGF-beta family.

It localises to the secreted. Its function is as follows. Promotes the survival of neuronal populations that are all located either in the central nervous system or directly connected to it. The sequence is that of Neurotrophic factor BDNF precursor form (BDNF) from Lichanura trivirgata (Rosy boa).